Reading from the N-terminus, the 23-residue chain is Coenzyme PQQ synthesis protein A (23 aa).

Residues 15 to 19 (EVTLY) constitute a cross-link (pyrroloquinoline quinone (Glu-Tyr)).

This sequence belongs to the PqqA family.

Its pathway is cofactor biosynthesis; pyrroloquinoline quinone biosynthesis. Functionally, required for coenzyme pyrroloquinoline quinone (PQQ) biosynthesis. PQQ is probably formed by cross-linking a specific glutamate to a specific tyrosine residue and excising these residues from the peptide. The chain is Coenzyme PQQ synthesis protein A from Klebsiella pneumoniae (strain 342).